The chain runs to 201 residues: Pyridoxal 5'-phosphate synthase subunit PdxT (201 aa).

49–51 (GES) provides a ligand contact to L-glutamine. Cys81 functions as the Nucleophile in the catalytic mechanism. L-glutamine is bound by residues Arg110 and 139–140 (IR). Catalysis depends on charge relay system residues His180 and Glu182.

Belongs to the glutaminase PdxT/SNO family. As to quaternary structure, in the presence of PdxS, forms a dodecamer of heterodimers. Only shows activity in the heterodimer.

The enzyme catalyses aldehydo-D-ribose 5-phosphate + D-glyceraldehyde 3-phosphate + L-glutamine = pyridoxal 5'-phosphate + L-glutamate + phosphate + 3 H2O + H(+). It catalyses the reaction L-glutamine + H2O = L-glutamate + NH4(+). The protein operates within cofactor biosynthesis; pyridoxal 5'-phosphate biosynthesis. Functionally, catalyzes the hydrolysis of glutamine to glutamate and ammonia as part of the biosynthesis of pyridoxal 5'-phosphate. The resulting ammonia molecule is channeled to the active site of PdxS. The polypeptide is Pyridoxal 5'-phosphate synthase subunit PdxT (Salinispora arenicola (strain CNS-205)).